The sequence spans 160 residues: Cytochrome b6-f complex subunit 4 (160 aa).

Helical transmembrane passes span 36 to 56 (LLYI…GLAV), 95 to 115 (LLGI…PFIE), and 128 to 148 (IAMS…IGAC).

This sequence belongs to the cytochrome b family. PetD subfamily. In terms of assembly, the 4 large subunits of the cytochrome b6-f complex are cytochrome b6, subunit IV (17 kDa polypeptide, PetD), cytochrome f and the Rieske protein, while the 4 small subunits are PetG, PetL, PetM and PetN. The complex functions as a dimer.

The protein localises to the cellular thylakoid membrane. In terms of biological role, component of the cytochrome b6-f complex, which mediates electron transfer between photosystem II (PSII) and photosystem I (PSI), cyclic electron flow around PSI, and state transitions. This chain is Cytochrome b6-f complex subunit 4, found in Prochlorococcus marinus (strain MIT 9312).